Here is a 717-residue protein sequence, read N- to C-terminus: Pre-mRNA-splicing factor ATP-dependent RNA helicase DEAH10 (717 aa).

The segment at 1-29 is disordered; the sequence is MPSMAQGELKSFVQNSRPNPKSPTVSPFS. A compositionally biased stretch (polar residues) spans 12–29; it reads FVQNSRPNPKSPTVSPFS. The Helicase ATP-binding domain occupies 51-256; it reads VEEVQKNDIL…FGGAKAVHVQ (206 aa). 64–71 provides a ligand contact to ATP; that stretch reads GETGSGKT. A DEAH box motif is present at residues 162–165; sequence DEAH. A Helicase C-terminal domain is found at 278–453; sequence TLVTIFQIHF…NIILQLKALG (176 aa).

The protein belongs to the DEAD box helicase family. DEAH subfamily. PRP22 sub-subfamily. In terms of tissue distribution, widely expressed but spatially and temporally regulated during development.

The protein localises to the nucleus. The protein resides in the nucleolus. The enzyme catalyses ATP + H2O = ADP + phosphate + H(+). In terms of biological role, involved in pre-mRNA splicing. Plays a role during development in processes such as meristem maintenance, leaf morphogenesis and root morphogenesis. In Arabidopsis thaliana (Mouse-ear cress), this protein is Pre-mRNA-splicing factor ATP-dependent RNA helicase DEAH10.